Reading from the N-terminus, the 125-residue chain is Snaclec coagulation factor IX/factor X-binding protein subunit B (125 aa).

Residues 1–122 (DCSSGWTAYG…SLFGHFVCKS (122 aa)) enclose the C-type lectin domain. Cystine bridges form between Cys2–Cys13, Cys30–Cys120, and Cys97–Cys112. Residues Ser41 and Glu47 each coordinate Ca(2+).

The protein belongs to the snaclec family. As to quaternary structure, heterodimer of subunits A and B; disulfide-linked. As to expression, expressed by the venom gland.

It localises to the secreted. Anticoagulant protein which binds to coagulation factor IX (F9) and coagulation factor X (F10) in the presence of calcium. It may bind the gamma-carboxyglutamic acid-domain regions of factors with a 1 to 1 stoichiometry. The dissociation constant (K(d)) are 6.6 nM for factor IX (F9) and 125 nM for factor X (F10). Does not bind carbohydrates. The sequence is that of Snaclec coagulation factor IX/factor X-binding protein subunit B from Echis carinatus (Saw-scaled viper).